A 175-amino-acid chain; its full sequence is SKP1-like protein 20 (175 aa).

The tract at residues 117–175 is interaction with the F-box domain of F-box proteins; sequence ILAANYLNIKGLLDLTCQTVADMIKGKTPEEIRKTFNIKNDFTPEEEEEVRRENQWAFE.

The protein belongs to the SKP1 family. In terms of assembly, part of a SCF (SKP1-CUL1-F-box protein) E3 ubiquitin-protein ligase complex. Interacts with rice black streaked dwarf virus RBSDV protein P7-2. Is able to form the SCF complex together with CUL1 and the viral P7-2 protein. Interacts with D3.

Its subcellular location is the nucleus. Its pathway is protein modification; protein ubiquitination. Involved in ubiquitination and subsequent proteasomal degradation of target proteins. Together with CUL1, a RING-box and a F-box protein, it forms a SCF E3 ubiquitin ligase complex. The functional specificity of this complex depends on the type of F-box protein. In the SCF complex, it serves as an adapter that links the F-box protein to CUL1. This chain is SKP1-like protein 20, found in Oryza sativa subsp. japonica (Rice).